A 234-amino-acid polypeptide reads, in one-letter code: 1-(5-phosphoribosyl)-5-[(5-phosphoribosylamino)methylideneamino] imidazole-4-carboxamide isomerase (234 aa).

The active-site Proton acceptor is the D9. The active-site Proton donor is D131.

It belongs to the HisA/HisF family.

It localises to the cytoplasm. It catalyses the reaction 1-(5-phospho-beta-D-ribosyl)-5-[(5-phospho-beta-D-ribosylamino)methylideneamino]imidazole-4-carboxamide = 5-[(5-phospho-1-deoxy-D-ribulos-1-ylimino)methylamino]-1-(5-phospho-beta-D-ribosyl)imidazole-4-carboxamide. The protein operates within amino-acid biosynthesis; L-histidine biosynthesis; L-histidine from 5-phospho-alpha-D-ribose 1-diphosphate: step 4/9. This chain is 1-(5-phosphoribosyl)-5-[(5-phosphoribosylamino)methylideneamino] imidazole-4-carboxamide isomerase, found in Staphylococcus epidermidis (strain ATCC 35984 / DSM 28319 / BCRC 17069 / CCUG 31568 / BM 3577 / RP62A).